The sequence spans 267 residues: 5'-nucleotidase SurE (267 aa).

Positions 9, 10, 40, and 97 each coordinate a divalent metal cation.

The protein belongs to the SurE nucleotidase family. It depends on a divalent metal cation as a cofactor.

It is found in the cytoplasm. The catalysed reaction is a ribonucleoside 5'-phosphate + H2O = a ribonucleoside + phosphate. Its function is as follows. Nucleotidase that shows phosphatase activity on nucleoside 5'-monophosphates. In Helicobacter pylori (strain HPAG1), this protein is 5'-nucleotidase SurE.